The primary structure comprises 335 residues: Ketol-acid reductoisomerase (NADP(+)) (335 aa).

The 181-residue stretch at 5–185 (SKIYTDKDSN…GATRAGVIPT (181 aa)) folds into the KARI N-terminal Rossmann domain. Residues 28–31 (YGSQ), serine 56, and 86–89 (DMVQ) each bind NADP(+). The active site involves histidine 111. Glycine 137 provides a ligand contact to NADP(+). Residues 186-331 (TFKEETETDL…NQLKDLIQKG (146 aa)) form the KARI C-terminal knotted domain. Mg(2+) is bound by residues aspartate 194, glutamate 198, glutamate 230, and glutamate 234. A substrate-binding site is contributed by serine 255.

This sequence belongs to the ketol-acid reductoisomerase family. It depends on Mg(2+) as a cofactor.

It carries out the reaction (2R)-2,3-dihydroxy-3-methylbutanoate + NADP(+) = (2S)-2-acetolactate + NADPH + H(+). The catalysed reaction is (2R,3R)-2,3-dihydroxy-3-methylpentanoate + NADP(+) = (S)-2-ethyl-2-hydroxy-3-oxobutanoate + NADPH + H(+). Its pathway is amino-acid biosynthesis; L-isoleucine biosynthesis; L-isoleucine from 2-oxobutanoate: step 2/4. It functions in the pathway amino-acid biosynthesis; L-valine biosynthesis; L-valine from pyruvate: step 2/4. Involved in the biosynthesis of branched-chain amino acids (BCAA). Catalyzes an alkyl-migration followed by a ketol-acid reduction of (S)-2-acetolactate (S2AL) to yield (R)-2,3-dihydroxy-isovalerate. In the isomerase reaction, S2AL is rearranged via a Mg-dependent methyl migration to produce 3-hydroxy-3-methyl-2-ketobutyrate (HMKB). In the reductase reaction, this 2-ketoacid undergoes a metal-dependent reduction by NADPH to yield (R)-2,3-dihydroxy-isovalerate. The chain is Ketol-acid reductoisomerase (NADP(+)) from Saccharolobus islandicus (strain M.16.27) (Sulfolobus islandicus).